Reading from the N-terminus, the 34-residue chain is Egg-releasing peptide (34 aa).

The sequence is that of Egg-releasing peptide from Aplysia californica (California sea hare).